A 524-amino-acid polypeptide reads, in one-letter code: Zinc finger protein 346 (524 aa).

Matrin-type zinc fingers lie at residues 34-64 (TQCK…KVRR), 92-126 (DRSK…LRLR), 162-192 (KFCK…QETK), 226-260 (GKGF…LMSM), 286-316 (FSCD…HLKS), 343-373 (FSCD…HLMS), and 400-430 (FSCD…QLMS). The Zn(2+) site is built by C36, C39, H52, H58, C97, C100, H113, and H119. Disordered regions lie at residues 453–486 (SAGG…GSLP) and 494–513 (PLYP…TMSP). Positions 476–486 (PKGPSSFGSLP) are enriched in low complexity.

The protein resides in the nucleus. The protein localises to the cytoplasm. Binds preferentially to dsRNA, but also to RNA-DNA hybrids. The protein is Zinc finger protein 346 of Xenopus laevis (African clawed frog).